The sequence spans 554 residues: CTP synthase (554 aa).

The segment at 1 to 265 is amidoligase domain; it reads MTPLIFVTGG…DEIVIDQFKL (265 aa). A CTP-binding site is contributed by S13. Residue S13 participates in UTP binding. Residues 14–19 and D71 each bind ATP; that span reads SLGKGI. Mg(2+) contacts are provided by D71 and E139. Residues 146–148, 186–191, and K222 each bind CTP; these read DIE and KTKPTQ. UTP-binding positions include 186–191 and K222; that span reads KTKPTQ. One can recognise a Glutamine amidotransferase type-1 domain in the interval 292-545; that stretch reads TIAVVGKYVD…VKAARARKAG (254 aa). Position 353 (G353) interacts with L-glutamine. C380 serves as the catalytic Nucleophile; for glutamine hydrolysis. L-glutamine contacts are provided by residues 381 to 384, E404, and R471; that span reads YGMQ. Residues H518 and E520 contribute to the active site.

Belongs to the CTP synthase family. Homotetramer.

The catalysed reaction is UTP + L-glutamine + ATP + H2O = CTP + L-glutamate + ADP + phosphate + 2 H(+). It catalyses the reaction L-glutamine + H2O = L-glutamate + NH4(+). It carries out the reaction UTP + NH4(+) + ATP = CTP + ADP + phosphate + 2 H(+). It functions in the pathway pyrimidine metabolism; CTP biosynthesis via de novo pathway; CTP from UDP: step 2/2. Its activity is regulated as follows. Allosterically activated by GTP, when glutamine is the substrate; GTP has no effect on the reaction when ammonia is the substrate. The allosteric effector GTP functions by stabilizing the protein conformation that binds the tetrahedral intermediate(s) formed during glutamine hydrolysis. Inhibited by the product CTP, via allosteric rather than competitive inhibition. In terms of biological role, catalyzes the ATP-dependent amination of UTP to CTP with either L-glutamine or ammonia as the source of nitrogen. Regulates intracellular CTP levels through interactions with the four ribonucleotide triphosphates. This is CTP synthase from Xylella fastidiosa (strain 9a5c).